A 678-amino-acid polypeptide reads, in one-letter code: Amino-acid acetyltransferase, mitochondrial (678 aa).

Residues 86–111 (LKAQHPPKAQTEPTTGHSKGTVTQSL) are disordered. Positions 96–111 (TEPTTGHSKGTVTQSL) are enriched in polar residues. Positions 499-668 (NRPRLSLDDP…YEQVCRSIQP (170 aa)) constitute an N-acetyltransferase domain.

The protein belongs to the acetyltransferase family.

It localises to the mitochondrion. The enzyme catalyses L-glutamate + acetyl-CoA = N-acetyl-L-glutamate + CoA + H(+). Its pathway is amino-acid biosynthesis; L-arginine biosynthesis; N(2)-acetyl-L-ornithine from L-glutamate: step 1/4. Functionally, N-acetylglutamate synthase involved in arginine biosynthesis. The polypeptide is Amino-acid acetyltransferase, mitochondrial (arg2) (Aspergillus oryzae (strain ATCC 42149 / RIB 40) (Yellow koji mold)).